The following is a 207-amino-acid chain: Sodium/potassium-transporting ATPase subunit beta-1-interacting protein 1 (207 aa).

A run of 3 helical transmembrane segments spans residues 2–22 (GRCSGRCTLVGICCLQLAAAL), 35–55 (APILANFLHIMVVILGILGTL), and 62–82 (LILYSIWLALWVAWNAFIICF). N-linked (GlcNAc...) asparagine glycosylation occurs at asparagine 100. The helical transmembrane segment at 147–167 (ALSSALQIFLALFGFVYACYV) threads the bilayer.

Belongs to the NKAIN family. Interacts with atp1b1 C-terminus.

The protein localises to the cell membrane. The sequence is that of Sodium/potassium-transporting ATPase subunit beta-1-interacting protein 1 (nkain1) from Xenopus tropicalis (Western clawed frog).